Consider the following 425-residue polypeptide: Glutamyl-tRNA(Gln) amidotransferase subunit A (425 aa).

Residues Lys29 and Ser104 each act as charge relay system in the active site. Residue Ser128 is the Acyl-ester intermediate of the active site.

Belongs to the amidase family. GatA subfamily. As to quaternary structure, heterotrimer of A, B and C subunits.

It carries out the reaction L-glutamyl-tRNA(Gln) + L-glutamine + ATP + H2O = L-glutaminyl-tRNA(Gln) + L-glutamate + ADP + phosphate + H(+). Allows the formation of correctly charged Gln-tRNA(Gln) through the transamidation of misacylated Glu-tRNA(Gln) in organisms which lack glutaminyl-tRNA synthetase. The reaction takes place in the presence of glutamine and ATP through an activated gamma-phospho-Glu-tRNA(Gln). This chain is Glutamyl-tRNA(Gln) amidotransferase subunit A, found in Haloarcula marismortui (strain ATCC 43049 / DSM 3752 / JCM 8966 / VKM B-1809) (Halobacterium marismortui).